The primary structure comprises 77 residues: Distinctin-like peptide (77 aa).

The signal sequence occupies residues 1 to 19 (LKKSLFLVTFLALVPLFLC). Residues 20–39 (EEEKREEENEERQDDDQSEE) constitute a propeptide that is removed on maturation.

The protein belongs to the frog skin active peptide (FSAP) family. In terms of tissue distribution, expressed by the skin glands.

The protein localises to the secreted. Functionally, has antimicrobial activity. This chain is Distinctin-like peptide, found in Pithecopus azureus (Orange-legged monkey tree frog).